We begin with the raw amino-acid sequence, 403 residues long: MSTSTSPAAMLLRRLRRLSWGSTAVQLFILTVVTFGLLAPLACHRLLHSYFYLRHWHLNQMSQEFLQQSLKEGEAALHYFEELPSANGSVPIVWQATPRPWLVITIITVDRQPGFHYVLQVVSQFHRLLQQCGPQCEGHQLFLCNVERSVSHFDAKLLSKYVPVANRYEGTEDDYGDDPSTNSFEKEKQDYVYCLESSLQTYNPDYVLMVEDDAVPEEQIFPVLEHLLRARFSEPHLRDALYLKLYHPERLQHYINPEPMRILEWVGVGMLLGPLLTWIYMRFASRPGFSWPVMLFFSLYSMGLVELVGRHYFLELRRLSPSLYSVVPASQCCTPAMLFPAPAARRTLTYLSQVYCHKGFGKDMALYSLLRAKGERAYVVEPNLVKHIGLFSSLRYNFHPSLL.

Over 1–22 the chain is Cytoplasmic; it reads MSTSTSPAAMLLRRLRRLSWGS. A helical transmembrane segment spans residues 23–43; that stretch reads TAVQLFILTVVTFGLLAPLAC. At 44–259 the chain is on the lumenal side; sequence HRLLHSYFYL…RLQHYINPEP (216 aa). An N-linked (GalNAc...) asparagine glycan is attached at asparagine 87. Valine 109 lines the UDP-N-acetyl-alpha-D-galactosamine pocket. 2 cysteine pairs are disulfide-bonded: cysteine 132–cysteine 136 and cysteine 144–cysteine 194. The short motif at 211–213 is the DXD motif element; it reads EDD. A helical membrane pass occupies residues 260 to 280; the sequence is MRILEWVGVGMLLGPLLTWIY. Residues 281-287 are Cytoplasmic-facing; the sequence is MRFASRP. A helical membrane pass occupies residues 288-308; sequence GFSWPVMLFFSLYSMGLVELV. Residues 309–403 are Lumenal-facing; sequence GRHYFLELRR…LRYNFHPSLL (95 aa). A disulfide bond links cysteine 332 and cysteine 333. UDP-N-acetyl-alpha-D-galactosamine-binding residues include threonine 334, proline 335, and lysine 362.

This sequence belongs to the PGAP4 family. Glycosylated.

Its subcellular location is the golgi apparatus membrane. Functionally, golgi-resident glycosylphosphatidylinositol (GPI)-N-acetylgalactosamine transferase that catalyzes the N-acetyl-beta-D-galactosamine transfer from an UDP-N-acetyl-alpha-D-galactosamine to the 4-OH-position of the first mannose of the glycosylphosphatidylinositol (GPI) of a GPI-anchored protein (GPI-AP). This modification occurs after the fatty acid remodeling step of the GPI-anchor maturation. This is GPI-N-acetylgalactosamine transferase PGAP4 from Homo sapiens (Human).